A 674-amino-acid polypeptide reads, in one-letter code: Carcinine transporter (674 aa).

The Cytoplasmic segment spans residues 1-53 (MSDIEDNDGDEYDELSELRQRHKPESQPSVDEAFDLDDLLPTIGEFGKYQKLL). Residues 54 to 74 (VFGICLPACIPCGFCAFNQLF) traverse the membrane as a helical segment. Topologically, residues 75 to 178 (MADTPDDYWC…DLVCDQDIYP (104 aa)) are extracellular. N-linked (GlcNAc...) asparagine glycans are attached at residues N122, N141, and N156. The chain crosses the membrane as a helical span at residues 179–199 (TIGLAALNTGGPVGVYLFGLL). Topologically, residues 200–206 (NDRGGRR) are cytoplasmic. A helical transmembrane segment spans residues 207–227 (LSYFVCLATLLAGSLMTSLSK). The Extracellular segment spans residues 228-236 (DFWTWAGSR). A helical membrane pass occupies residues 237–257 (VIVGLTIPAVYQIPFIISLEL). The Cytoplasmic portion of the chain corresponds to 258–264 (VGENYRS). The helical transmembrane segment at 265 to 285 (FVTVMTCTFYTSGIMLLSGVT) threads the bilayer. The Extracellular segment spans residues 286–293 (YLERDWVR). A helical membrane pass occupies residues 294-314 (LSYITSLPFYAYFLYMFVMPE). Residues 315–385 (SPRWLLMRGR…CRTPNMRLKT (71 aa)) are Cytoplasmic-facing. Residues 386–406 (ILITLSWFANETVYLGLSYYG) traverse the membrane as a helical segment. Residues 407-414 (PALGTNQY) are Extracellular-facing. The helical transmembrane segment at 415–435 (VSFFLSAVVELPSYLCCWYFM) threads the bilayer. Topologically, residues 436 to 441 (DTWGRR) are cytoplasmic. The chain crosses the membrane as a helical span at residues 442 to 462 (WPLSLSMILGGVACVITVMLP). Residues 463–469 (DDAVDET) are Extracellular-facing. Residues 470–490 (LVLYLVSKALLSASFLIIYPF) form a helical membrane-spanning segment. The Cytoplasmic portion of the chain corresponds to 491-500 (AGELYPTQVR). Residues 501-521 (GIGIGASSYIGGLGLIGIPFI) traverse the membrane as a helical segment. Over 522–527 (TYLGKD) the chain is Extracellular. The helical transmembrane segment at 528-548 (NLKLPLVIMGFLSMLGGMTGL) threads the bilayer. Over 549 to 674 (RLPETLHHRL…DGTMQLTHWI (126 aa)) the chain is Cytoplasmic. Basic and acidic residues predominate over residues 614-631 (RDSRRVREPAPRIDERTP). Positions 614-647 (RDSRRVREPAPRIDERTPLDTTASGSGRPVHRPS) are disordered.

The protein belongs to the major facilitator (TC 2.A.1) superfamily. Organic cation transporter (TC 2.A.1.19) family. In terms of tissue distribution, expressed in photoreceptor cells.

Its subcellular location is the cell membrane. It localises to the cell projection. The protein localises to the axon. Its function is as follows. Carcinine transporter which is required for recycling of the neurotransmitter histamine in photoreceptor neurons of the compound eye. Following histamine release from photoreceptors and its uptake by glia where it is converted to carcinine, required for the uptake of carcinine from glia into photoreceptor cells where it can be hydrolyzed by tan to form histamine and beta-alanine. In Drosophila melanogaster (Fruit fly), this protein is Carcinine transporter.